A 1163-amino-acid chain; its full sequence is Hamartin (1163 aa).

A Glycyl lysine isopeptide (Lys-Gly) (interchain with G-Cter in ubiquitin) cross-link involves residue Lys-30. Polar residues predominate over residues Ser-295–Arg-316. Disordered stretches follow at residues Ser-295–Pro-337 and Cys-353–Val-594. The segment covering Ser-321–Pro-337 has biased composition (low complexity). A compositionally biased stretch (pro residues) spans Thr-393–Pro-402. The interval Gln-403–Glu-787 is mediates interaction with WDR45B. Positions Glu-474–Ser-487 are enriched in basic and acidic residues. Residues Ser-487, Ser-505, Ser-511, Ser-521, Ser-595, and Ser-598 each carry the phosphoserine modification. Residues Leu-512 to Ser-530 show a composition bias toward polar residues. Coiled coils occupy residues Arg-721 to Lys-919 and Glu-970 to Asp-994. The span at Asn-1008–Thr-1020 shows a compositional bias: basic and acidic residues. Residues Asn-1008–Ser-1163 are disordered. Residues Ser-1029–Ser-1046 are compositionally biased toward low complexity. Residues Glu-1066–Ser-1083 show a composition bias toward polar residues. Basic and acidic residues predominate over residues Lys-1088–Ser-1099. Position 1097 is a phosphoserine (Ser-1097). Over residues Pro-1131–Ser-1146 the composition is skewed to low complexity. Positions Asp-1154–Ser-1163 are enriched in basic and acidic residues.

As to quaternary structure, component of the TSC-TBC complex (also named Rhebulator complex), composed of 2 molecules of TSC1, 2 molecules of TSC2 and 1 molecule of TBC1D7. Probably forms a complex composed of chaperones HSP90 and HSP70, co-chaperones STIP1/HOP, CDC37, PPP5C, PTGES3/p23, TSC1 and client protein TSC2. Forms a complex composed of chaperones HSP90 and HSP70, co-chaperones CDC37, PPP5C, TSC1 and client protein TSC2, CDK4, AKT, RAF1 and NR3C1; this complex does not contain co-chaperones STIP1/HOP and PTGES3/p23. Forms a complex containing HSP90AA1, TSC1 and TSC2; TSC1 is required to recruit TCS2 to the complex. Interacts (via C-terminus) with the closed form of HSP90AA1 (via the middle domain and TPR repeat-binding motif). Interacts with DOCK7. Interacts with FBXW5. Interacts with WDR45B. Interacts with RPAP3 and URI1. In terms of processing, phosphorylation at Ser-505 does not affect interaction with TSC2. Post-translationally, 'Lys-63'-linked ubiquitinated at Lys-30 by PELI1; the ubiquitination promotes TSC1/TSC2 complex stability. As to expression, highly expressed in brain, spleen and kidney, followed by liver and heart.

Its subcellular location is the lysosome membrane. The protein resides in the cytoplasm. It localises to the cytosol. Functionally, non-catalytic component of the TSC-TBC complex, a multiprotein complex that acts as a negative regulator of the canonical mTORC1 complex, an evolutionarily conserved central nutrient sensor that stimulates anabolic reactions and macromolecule biosynthesis to promote cellular biomass generation and growth. The TSC-TBC complex acts as a GTPase-activating protein (GAP) for the small GTPase RHEB, a direct activator of the protein kinase activity of mTORC1. In absence of nutrients, the TSC-TBC complex inhibits mTORC1, thereby preventing phosphorylation of ribosomal protein S6 kinase (RPS6KB1 and RPS6KB2) and EIF4EBP1 (4E-BP1) by the mTORC1 signaling. The TSC-TBC complex is inactivated in response to nutrients, relieving inhibition of mTORC1. Within the TSC-TBC complex, TSC1 stabilizes TSC2 and prevents TSC2 self-aggregation. Involved in microtubule-mediated protein transport via its ability to regulate mTORC1 signaling. Also acts as a co-chaperone for HSP90AA1 facilitating HSP90AA1 chaperoning of protein clients such as kinases, TSC2 and glucocorticoid receptor NR3C1. Increases ATP binding to HSP90AA1 and inhibits HSP90AA1 ATPase activity. Competes with the activating co-chaperone AHSA1 for binding to HSP90AA1, thereby providing a reciprocal regulatory mechanism for chaperoning of client proteins. Recruits TSC2 to HSP90AA1 and stabilizes TSC2 by preventing the interaction between TSC2 and ubiquitin ligase HERC1. This chain is Hamartin, found in Rattus norvegicus (Rat).